Reading from the N-terminus, the 383-residue chain is Acetylornithine deacetylase (383 aa).

H80 serves as a coordination point for Zn(2+). Residue D82 is part of the active site. Position 112 (D112) interacts with Zn(2+). Residue E144 is part of the active site. Zn(2+) is bound by residues E145, E169, and H355.

It belongs to the peptidase M20A family. ArgE subfamily. In terms of assembly, homodimer. It depends on Zn(2+) as a cofactor. Co(2+) is required as a cofactor. Glutathione serves as cofactor.

Its subcellular location is the cytoplasm. It catalyses the reaction N(2)-acetyl-L-ornithine + H2O = L-ornithine + acetate. Its pathway is amino-acid biosynthesis; L-arginine biosynthesis; L-ornithine from N(2)-acetyl-L-ornithine (linear): step 1/1. Catalyzes the hydrolysis of the amide bond of N(2)-acetylated L-amino acids. Cleaves the acetyl group from N-acetyl-L-ornithine to form L-ornithine, an intermediate in L-arginine biosynthesis pathway, and a branchpoint in the synthesis of polyamines. The protein is Acetylornithine deacetylase of Escherichia coli O7:K1 (strain IAI39 / ExPEC).